The following is a 378-amino-acid chain: Packaging protein 3 (378 aa).

2 disordered regions span residues 1-73 and 355-378; these read MHPV…EGPV and SRPP…DDFI. The tract at residues 1 to 178 is interaction with packaging protein 1; that stretch reads MHPVLQSVRN…AFGEELRNTC (178 aa). Composition is skewed to low complexity over residues 16–35 and 49–58; these read GGPH…SVRR and PGAGATPTAG. S362 carries the post-translational modification Phosphoserine; by host. The segment covering 363–378 has biased composition (acidic residues); the sequence is FADEGPSESDDEDDFI.

It belongs to the adenoviridae packaging protein 3 family. As to quaternary structure, part of the genome packaging complex composed of packaging proteins 1, 2 and 3; this complex specifically binds to the packaging sequence on the left end of viral genomic DNA and performs packaging of the viral genome. Interacts with hexon-linking protein IIIa; this interaction is required to promote correct genome packaging. Post-translationally, cleaved at different sites by the viral protease during virion maturation.

It localises to the host nucleus. Involved in viral genome packaging through its interaction with packaging proteins 1 and 2. After proteolytic cleavage by adenovirus protease, L1 52/55k protein is removed from the capsid during viral maturation. The polypeptide is Packaging protein 3 (Galliformes (FAdV-1)).